We begin with the raw amino-acid sequence, 572 residues long: MADKSETTPPSIDGNVLVAKSLSHLGVTHMFGVVGIPVTSLASRAMALGIRFIAFHNEQSAGYAASAYGYLTGKPGILLTVSGPGCVHGLAGLSNAWVNTWPMVMISGSCDQRDVGRGDFQELDQIEAVKAFSKLSEKAKDVREIPDCVSRVLDRAVSGRPGGCYLDIPTDVLRQKISESEADKLVDEVERSRKEEPIRGSLRSEIESAVSLLRKAERPLIVFGKGAAYSRAEDELKKLVEITGIPFLPTPMGKGLLPDTHEFSATAARSLAIGKCDVALVVGARLNWLLHFGESPKWDKDVKFILVDVSEEEIELRKPHLGIVGDAKTVIGLLNREIKDDPFCLGKSNSWVESISKKAKENGEKMEIQLAKDVVPFNFLTPMRIIRDAILAVEGPSPVVVSEGANTMDVGRSVLVQKEPRTRLDAGTWGTMGVGLGYCIAAAVASPDRLVVAVEGDSGFGFSAMEVETLVRYNLAVVIIVFNNGGVYGGDRRGPEEISGPHKEDPAPTSFVPNAGYHKLIEAFGGKGYIVETPDELKSALAESFAARKPAVVNVIIDPFAGAESGRLQHKN.

Ala-2 is subject to N-acetylalanine. Glu-58 contributes to the thiamine diphosphate binding site. The tract at residues 407–488 (TMDVGRSVLV…IIVFNNGGVY (82 aa)) is thiamine pyrophosphate binding. 2 residues coordinate Mg(2+): Asp-457 and Asn-484.

It belongs to the TPP enzyme family. Homotetramer. Mg(2+) is required as a cofactor. It depends on thiamine diphosphate as a cofactor.

It catalyses the reaction an (R)-2-hydroxy-long-chain-fatty acyl-CoA = a long-chain fatty aldehyde + formyl-CoA. The enzyme catalyses a 2-hydroxy-3-methyl fatty acyl-CoA = a 2-methyl-branched fatty aldehyde + formyl-CoA. Its function is as follows. Catalyzes a carbon-carbon cleavage reaction; cleaves a 2-hydroxy-3-methylacyl-CoA into formyl-CoA and a 2-methyl-branched fatty aldehyde. This chain is 2-hydroxyacyl-CoA lyase (HACL), found in Arabidopsis thaliana (Mouse-ear cress).